The following is a 103-amino-acid chain: Histone H4 (103 aa).

Positions 1–14 (MSGRGKGGKGLGKG) are enriched in gly residues. Positions 1-20 (MSGRGKGGKGLGKGGAKRHR) are disordered. N6-acetyl-N6-methyllysine; alternate is present on lysine 6. N6-methyllysine; alternate occurs at positions 6, 9, and 13. Lysine 13 carries the N6-acetyl-N6-methyllysine; alternate modification. A DNA-binding region spans residues 17–21 (KRHRK). Lysine 92 bears the N6-glutaryllysine mark.

Belongs to the histone H4 family. The nucleosome is a histone octamer containing two molecules each of H2A, H2B, H3 and H4 assembled in one H3-H4 heterotetramer and two H2A-H2B heterodimers. The octamer wraps approximately 147 bp of DNA. In terms of processing, glutarylation at Lys-92 (H4K91glu) destabilizes nucleosomes by promoting dissociation of the H2A-H2B dimers from nucleosomes.

It localises to the nucleus. The protein localises to the chromosome. Functionally, core component of nucleosome. Nucleosomes wrap and compact DNA into chromatin, limiting DNA accessibility to the cellular machineries which require DNA as a template. Histones thereby play a central role in transcription regulation, DNA repair, DNA replication and chromosomal stability. DNA accessibility is regulated via a complex set of post-translational modifications of histones, also called histone code, and nucleosome remodeling. The polypeptide is Histone H4 (H4.1) (Phanerodontia chrysosporium (White-rot fungus)).